We begin with the raw amino-acid sequence, 246 residues long: Caffeoyl-CoA O-methyltransferase 1 (246 aa).

Residue lysine 21 coordinates substrate. S-adenosyl-L-methionine-binding positions include threonine 63, glutamate 85, 87 to 88 (GV), serine 93, aspartate 111, and alanine 140. Substrate is bound at residue aspartate 162. An a divalent metal cation-binding site is contributed by aspartate 162. Aspartate 164 is an S-adenosyl-L-methionine binding site. Residues aspartate 188 and asparagine 189 each coordinate a divalent metal cation. Asparagine 193 lines the substrate pocket.

It belongs to the class I-like SAM-binding methyltransferase superfamily. Cation-dependent O-methyltransferase family. CCoAMT subfamily. A divalent metal cation serves as cofactor.

It carries out the reaction (E)-caffeoyl-CoA + S-adenosyl-L-methionine = (E)-feruloyl-CoA + S-adenosyl-L-homocysteine + H(+). It participates in aromatic compound metabolism; phenylpropanoid biosynthesis. Functionally, methylates caffeoyl-CoA to feruloyl-CoA and 5-hydroxyferuloyl-CoA to sinapoyl-CoA. Plays a role in the synthesis of feruloylated polysaccharides. Involved in the reinforcement of the plant cell wall. Also involved in the responding to wounding or pathogen challenge by the increased formation of cell wall-bound ferulic acid polymers. The protein is Caffeoyl-CoA O-methyltransferase 1 (CCOMT) of Eucalyptus globulus (Tasmanian blue gum).